A 137-amino-acid polypeptide reads, in one-letter code: Interferon-induced transmembrane protein 3 (137 aa).

Residues 1-57 (MNHTSQAFITAASGGQPPNYERIKEEYEVAEMGAPHGSASVRTTVINMPREVSVPDH) lie on the Cytoplasmic side of the membrane. A Phosphotyrosine modification is found at Tyr20. Lys24 is covalently cross-linked (Glycyl lysine isopeptide (Lys-Gly) (interchain with G-Cter in ubiquitin)). At Tyr27 the chain carries Phosphotyrosine. Positions 58–78 (VVWSLFNTLFMNFCCLGFIAY) form an intramembrane region, helical. The segment at 60-93 (WSLFNTLFMNFCCLGFIAYAYSVKSRDRKMVGDV) is interaction with SPP1. 2 S-palmitoyl cysteine lipidation sites follow: Cys71 and Cys72. Residues 79 to 109 (AYSVKSRDRKMVGDVTGAQAYASTAKCLNIS) are Cytoplasmic-facing. Residues Lys83, Lys88, and Lys104 each participate in a glycyl lysine isopeptide (Lys-Gly) (interchain with G-Cter in ubiquitin) cross-link. Cys105 carries the S-palmitoyl cysteine lipid modification. Positions 108-133 (ISTLVLSILMVVITIVSVIIIVLNAQ) are interaction with VAPA. Residues 110–130 (TLVLSILMVVITIVSVIIIVL) form a helical membrane-spanning segment. Over 131–137 (NAQNLHT) the chain is Extracellular.

This sequence belongs to the CD225/Dispanin family. Interacts with ATP6V0B. Interacts with CD81. Interacts with SPP1; the interaction reduces OPN expression. Interacts with BRI3. In terms of processing, polyubiquitinated with both 'Lys-48' and 'Lys-63' linkages. Ubiquitination negatively regulates antiviral activity. Lys-24 is the most prevalent ubiquitination site. Phosphorylation at Tyr-20 is required for endosomal and lysosomal location. As to expression, expressed in acinar cell. Predominantly expressed in nascent primordial germ cells, as well as in gonadal germ cells.

The protein localises to the cell membrane. The protein resides in the late endosome membrane. It localises to the early endosome membrane. Its subcellular location is the lysosome membrane. It is found in the cytoplasm. The protein localises to the perinuclear region. Functionally, IFN-induced antiviral protein which disrupts intracellular cholesterol homeostasis. Inhibits the entry of viruses to the host cell cytoplasm by preventing viral fusion with cholesterol depleted endosomes. May inactivate new enveloped viruses which buds out of the infected cell, by letting them go out with a cholesterol depleted membrane. Active against multiple viruses, including influenza A virus, SARS coronaviruses (SARS-CoV and SARS-CoV-2), Marburg virus (MARV), Ebola virus (EBOV), Dengue virus (DNV), West Nile virus (WNV), human immunodeficiency virus type 1 (HIV-1), hepatitis C virus (HCV) and vesicular stomatitis virus (VSV). Can inhibit: influenza virus hemagglutinin protein-mediated viral entry, MARV and EBOV GP1,2-mediated viral entry, SARS-CoV and SARS-CoV-2 S protein-mediated viral entry and VSV G protein-mediated viral entry. Plays a critical role in the structural stability and function of vacuolar ATPase (v-ATPase). Establishes physical contact with the v-ATPase of endosomes which is critical for proper clathrin localization and is also required for the function of the v-ATPase to lower the pH in phagocytic endosomes thus establishing an antiviral state. In hepatocytes, IFITM proteins act in a coordinated manner to restrict HCV infection by targeting the endocytosed HCV virion for lysosomal degradation. IFITM2 and IFITM3 display anti-HCV activity that may complement the anti-HCV activity of IFITM1 by inhibiting the late stages of HCV entry, possibly in a coordinated manner by trapping the virion in the endosomal pathway and targeting it for degradation at the lysosome. Exerts opposing activities on SARS-CoV-2, including amphipathicity-dependent restriction of virus at endosomes and amphipathicity-independent enhancement of infection at the plasma membrane. The protein is Interferon-induced transmembrane protein 3 of Mus musculus (Mouse).